A 134-amino-acid chain; its full sequence is Small ribosomal subunit protein uS11 (134 aa).

This sequence belongs to the universal ribosomal protein uS11 family. As to quaternary structure, part of the 30S ribosomal subunit. Interacts with proteins S7 and S18. Binds to IF-3.

In terms of biological role, located on the platform of the 30S subunit, it bridges several disparate RNA helices of the 16S rRNA. Forms part of the Shine-Dalgarno cleft in the 70S ribosome. This Salinibacter ruber (strain DSM 13855 / M31) protein is Small ribosomal subunit protein uS11.